The following is a 103-amino-acid chain: MQKIRKGDKVVVLTGKDKGRTGEVIQVMPKEDRALVRGVNVVKRHQRQTQNQEAGIITKEASIHLSNIAIADPKDGKPTRVGFKIDGDKKVRVAKRSGDVIDG.

This sequence belongs to the universal ribosomal protein uL24 family. In terms of assembly, part of the 50S ribosomal subunit.

Its function is as follows. One of two assembly initiator proteins, it binds directly to the 5'-end of the 23S rRNA, where it nucleates assembly of the 50S subunit. One of the proteins that surrounds the polypeptide exit tunnel on the outside of the subunit. The polypeptide is Large ribosomal subunit protein uL24 (Rhizobium meliloti (strain 1021) (Ensifer meliloti)).